The primary structure comprises 551 residues: Probable NADH-ubiquinone oxidoreductase C3A11.07, mitochondrial (551 aa).

A mitochondrion-targeting transit peptide spans 1–37 (MLFSRSILRGMPKAGIPKSPLALSASRNLRLANSVRF). Residue 93 to 123 (TLVVLGAGWGATSILRTIDTSLFNVIVVSPR) coordinates FAD. Residue 255–291 (VHTVVVGGGPTGMEFAGEMADFIEDDLKSWYPELADD) coordinates NAD(+).

Belongs to the NADH dehydrogenase family.

It localises to the mitochondrion. The enzyme catalyses a quinone + NADH + H(+) = a quinol + NAD(+). The catalysed reaction is a ubiquinone + NADH + H(+) = a ubiquinol + NAD(+). Functionally, catalyzes the oxidation of NADH. This is Probable NADH-ubiquinone oxidoreductase C3A11.07, mitochondrial from Schizosaccharomyces pombe (strain 972 / ATCC 24843) (Fission yeast).